The sequence spans 207 residues: 2,3-bisphosphoglycerate-dependent phosphoglycerate mutase (207 aa).

Residues 10–17, 23–24, Arg-62, 89–92, Lys-100, 116–117, and 160–161 each bind substrate; these read RHGQSEWN, TG, ERDY, RR, and GN. The Tele-phosphohistidine intermediate role is filled by His-11. Residue Glu-89 is the Proton donor/acceptor of the active site.

This sequence belongs to the phosphoglycerate mutase family. BPG-dependent PGAM subfamily. As to quaternary structure, homodimer.

It carries out the reaction (2R)-2-phosphoglycerate = (2R)-3-phosphoglycerate. Its pathway is carbohydrate degradation; glycolysis; pyruvate from D-glyceraldehyde 3-phosphate: step 3/5. Its function is as follows. Catalyzes the interconversion of 2-phosphoglycerate and 3-phosphoglycerate. The protein is 2,3-bisphosphoglycerate-dependent phosphoglycerate mutase of Rhodopseudomonas palustris (strain BisB18).